Here is a 111-residue protein sequence, read N- to C-terminus: Nucleoid-associated protein Cpar_0834 (111 aa).

This sequence belongs to the YbaB/EbfC family. Homodimer.

The protein resides in the cytoplasm. It localises to the nucleoid. Its function is as follows. Binds to DNA and alters its conformation. May be involved in regulation of gene expression, nucleoid organization and DNA protection. The sequence is that of Nucleoid-associated protein Cpar_0834 from Chlorobaculum parvum (strain DSM 263 / NCIMB 8327) (Chlorobium vibrioforme subsp. thiosulfatophilum).